A 378-amino-acid polypeptide reads, in one-letter code: uncharacterized protein (378 aa).

Positions 1–11 are enriched in basic residues; sequence MSPMNRQRKNK. Residues 1-23 are disordered; it reads MSPMNRQRKNKSNVLNEKDERPG.

This is an uncharacterized protein from Caenorhabditis elegans.